Consider the following 32-residue polypeptide: Trypsin inhibitor 2b (32 aa).

3 cysteine pairs are disulfide-bonded: cysteine 3-cysteine 20, cysteine 10-cysteine 22, and cysteine 16-cysteine 29.

It belongs to the protease inhibitor I7 (squash-type serine protease inhibitor) family.

It localises to the secreted. Functionally, inhibits trypsin. The sequence is that of Trypsin inhibitor 2b from Cucumis sativus (Cucumber).